The chain runs to 537 residues: Zinc finger and BTB domain-containing protein 18 (537 aa).

Residues 24–91 (CDSTVLVGDA…MYEGKLQFKS (68 aa)) form the BTB domain. Basic and acidic residues predominate over residues 122-143 (TAEADSTKREEDTSSCSDKVES). Disordered regions lie at residues 122 to 232 (TAEA…RVSA) and 335 to 355 (ASEL…LGGD). Composition is skewed to low complexity over residues 182–195 (RLPS…TTSP) and 208–229 (SPAG…ASRR). C2H2-type zinc fingers lie at residues 385-407 (FMCP…LSTH), 425-447 (PTCS…ERTH), 453-475 (YTCT…AVVH), and 481-504 (HACK…RKFH).

It belongs to the krueppel C2H2-type zinc-finger protein family. ZBTB18 subfamily.

The protein localises to the nucleus. Transcriptional repressor that plays a role in various developmental processes. Specifically binds the consensus DNA sequence 5'-[AC]ACATCTG[GT][AC]-3' which contains the E box core, and acts by recruiting chromatin remodeling multiprotein complexes. In Danio rerio (Zebrafish), this protein is Zinc finger and BTB domain-containing protein 18 (zbtb18).